The chain runs to 389 residues: Capreomycidine synthase (389 aa).

N6-(pyridoxal phosphate)lysine is present on Lys-230.

This sequence belongs to the class-II pyridoxal-phosphate-dependent aminotransferase family. It depends on pyridoxal 5'-phosphate as a cofactor.

The catalysed reaction is (2S,3S)-hydroxyarginine = (2S,3R)-capreomycidine + H2O. Its pathway is antibiotic biosynthesis. Functionally, involved in the biosynthesis of capreomycidine, an unusual amino acid used by non-ribosomal peptide synthases (NRPS) to make the tuberactinomycin class of peptide antibiotic such as viomycin and capreomycin. Catalyzes the dehydration of the C3 hydroxyl of (3S)-hydroxy-(2S)-arginine and the intramolecular cyclization to yield (2S,3R)-capreomycidine. In Streptomyces vinaceus, this protein is Capreomycidine synthase.